A 184-amino-acid chain; its full sequence is Photosystem I assembly protein Ycf4 (184 aa).

Helical transmembrane passes span leucine 22–serine 42 and isoleucine 64–isoleucine 84.

This sequence belongs to the Ycf4 family.

The protein localises to the plastid. Its subcellular location is the chloroplast thylakoid membrane. In terms of biological role, seems to be required for the assembly of the photosystem I complex. The polypeptide is Photosystem I assembly protein Ycf4 (Angiopteris evecta (Mule's foot fern)).